We begin with the raw amino-acid sequence, 101 residues long: Small ribosomal subunit protein uS14 (101 aa).

Belongs to the universal ribosomal protein uS14 family. Part of the 30S ribosomal subunit. Contacts proteins S3 and S10.

Functionally, binds 16S rRNA, required for the assembly of 30S particles and may also be responsible for determining the conformation of the 16S rRNA at the A site. The protein is Small ribosomal subunit protein uS14 of Idiomarina loihiensis (strain ATCC BAA-735 / DSM 15497 / L2-TR).